We begin with the raw amino-acid sequence, 586 residues long: Proteasome-associated ATPase (586 aa).

The stretch at 11 to 76 forms a coiled coil; the sequence is AWRELEAVRA…LREEVDRLGQ (66 aa). 273–278 contacts ATP; it reads GCGKTL. The segment at 585–586 is docks into pockets in the proteasome alpha-ring; that stretch reads YL.

It belongs to the AAA ATPase family. In terms of assembly, homohexamer. Assembles into a hexameric ring structure that caps the 20S proteasome core. Strongly interacts with the prokaryotic ubiquitin-like protein Pup through a hydrophobic interface; the interacting region of ARC lies in its N-terminal coiled-coil domain. There is one Pup binding site per ARC hexamer ring. Upon ATP-binding, the C-terminus of ARC interacts with the alpha-rings of the proteasome core, possibly by binding to the intersubunit pockets.

It participates in protein degradation; proteasomal Pup-dependent pathway. Functionally, ATPase which is responsible for recognizing, binding, unfolding and translocation of pupylated proteins into the bacterial 20S proteasome core particle. May be essential for opening the gate of the 20S proteasome via an interaction with its C-terminus, thereby allowing substrate entry and access to the site of proteolysis. Thus, the C-termini of the proteasomal ATPase may function like a 'key in a lock' to induce gate opening and therefore regulate proteolysis. This chain is Proteasome-associated ATPase, found in Nocardia farcinica (strain IFM 10152).